Reading from the N-terminus, the 60-residue chain is Toxin S4C8 (60 aa).

4 disulfide bridges follow: Cys3–Cys22, Cys17–Cys39, Cys41–Cys52, and Cys53–Cys58. Positions 41 to 48 are important for binding to L-type calcium channels; sequence CPTAMWPY.

The protein belongs to the three-finger toxin family. Short-chain subfamily. L-type calcium blocker sub-subfamily. Expressed by the venom gland.

Its subcellular location is the secreted. Functionally, this specific blocker of the L-type calcium channel (Cav1/CACNA1) is a smooth muscle relaxant and an inhibitor of cardiac contractions. In Dendroaspis jamesoni kaimosae (Eastern Jameson's mamba), this protein is Toxin S4C8.